We begin with the raw amino-acid sequence, 371 residues long: Hsc70-interacting protein (371 aa).

Positions 38–80 (MGGKVPPATHKAKSEENTKEEKRDKTTEENIKTEELSSEESDL) are disordered. A compositionally biased stretch (basic and acidic residues) spans 49–72 (AKSEENTKEEKRDKTTEENIKTEE). TPR repeat units lie at residues 113–146 (ANEK…NPRL), 147–180 (AILY…NPDS), and 181–214 (AQPY…DYDE). Over residues 255-271 (KAREEHERAQREEEARR) the composition is skewed to basic and acidic residues. The tract at residues 255–296 (KAREEHERAQREEEARRQSGSQYGSFPGGFPGGMPGNFPGGM) is disordered. Gly residues predominate over residues 280–296 (FPGGFPGGMPGNFPGGM). One can recognise an STI1 domain in the interval 321-360 (DPEVLAAMQDPEVMVAFQDVAQNPSNMSKYQSNPKVMNLI). Ser-348 is subject to Phosphoserine; by GRK5. An N6-acetyllysine mark is found at Lys-355 and Lys-362.

This sequence belongs to the FAM10 family. Homotetramer. Interacts with HSC70 as well as DNAJ homologs and HSP90. Interacts (via the C-terminus 302- 318 AA) with GRK5.

The protein resides in the cytoplasm. Functionally, one HIP oligomer binds the ATPase domains of at least two HSC70 molecules dependent on activation of the HSC70 ATPase by HSP40. Stabilizes the ADP state of HSC70 that has a high affinity for substrate protein. Through its own chaperone activity, it may contribute to the interaction of HSC70 with various target proteins. The sequence is that of Hsc70-interacting protein (St13) from Mus musculus (Mouse).